The following is a 272-amino-acid chain: Tumor necrosis factor receptor superfamily member 4 (272 aa).

The first 19 residues, 1 to 19 (MYVWVQQPTALLLLALTLG), serve as a signal peptide directing secretion. Topologically, residues 20–211 (VTARRLNCVK…PPTLVTPEGP (192 aa)) are extracellular. TNFR-Cys repeat units follow at residues 26 to 61 (NCVK…TLCH) and 62 to 103 (PCET…DTVC). Cystine bridges form between Cys-27-Cys-38, Cys-39-Cys-52, Cys-42-Cys-60, Cys-63-Cys-77, Cys-80-Cys-95, Cys-83-Cys-103, Cys-105-Cys-123, and Cys-126-Cys-139. Residues 104 to 124 (RCRPGTQPRQDSGYKLGVDCV) form a TNFR-Cys 3; truncated repeat. The stretch at 125 to 165 (PCPPGHFSPGNNQACKPWTNCTLSGKQTRHPASDSLDAVCE) is one TNFR-Cys 4 repeat. Asn-144 is a glycosylation site (N-linked (GlcNAc...) asparagine). The cysteines at positions 145 and 164 are disulfide-linked. Residues 212–236 (AFAVLLGLGLGLLAPLTVLLALYLL) traverse the membrane as a helical segment. Residues 237-272 (RKAWRLPNTPKPCWGNSFRTPIQEEHTDAHFTLAKI) are Cytoplasmic-facing.

As to quaternary structure, interacts with TRAF2, TRAF3 and TRAF5. Expressed in CD4(+) T-cells and in T-helper Th17 cells (at protein level).

The protein resides in the membrane. Its function is as follows. Receptor for TNFSF4/OX40L/GP34. Is a costimulatory molecule implicated in long-term T-cell immunity. The protein is Tumor necrosis factor receptor superfamily member 4 (Tnfrsf4) of Mus musculus (Mouse).